We begin with the raw amino-acid sequence, 376 residues long: 2-hydroxypropyl-CoM lyase (376 aa).

Residues histidine 218, cysteine 220, and cysteine 341 each contribute to the Zn(2+) site.

It belongs to the vitamin-B12 independent methionine synthase family. In terms of assembly, homohexamer. Component I of the aliphatic epoxide carboxylation complex together with components II, III and IV. Zn(2+) is required as a cofactor.

The catalysed reaction is (R)-2-hydroxypropyl-coenzyme M = (R)-1,2-epoxypropane + coenzyme M. It catalyses the reaction (S)-2-hydroxypropyl-coenzyme M = (S)-1,2-epoxypropane + coenzyme M. It participates in alkene metabolism; propylene degradation. Its activity is regulated as follows. Inhibited by methylepoxypropane. Inhibited by the zinc chelator 4-(2-pyridylazo)resorcinol (PAR), in the presence of p- (hydroxymercuri)benzenesulfonic acid (PMPS), and by EDTA. Not inhibited by the coenzyme M analog 2-bromoethanesulfonate (BES). Its function is as follows. Involved in aliphatic epoxide carboxylation. Catalyzes the addition of coenzyme M (CoM) to either R- or S-epoxypropane to form the thioether conjugate 2-hydroxypropyl-CoM. Catalyzes the reaction of CoM with R-epoxypropane at a rate approximately twice of that with S-epoxypropane. The CoM analogs 2-mercaptopropionate, 2-mercaptoethanol and cysteine substitute poorly for CoM as the thiol substrate. This is 2-hydroxypropyl-CoM lyase from Xanthobacter autotrophicus (strain ATCC BAA-1158 / Py2).